The chain runs to 105 residues: Zinc metalloproteinase/disintegrin (105 aa).

In terms of domain architecture, Peptidase M12B spans 1 to 3 (DEP). Residues 11 to 96 (PPVCGNYFVE…AECTDRFQRN (86 aa)) enclose the Disintegrin domain. 6 disulfides stabilise this stretch: C25–C43, C27–C38, C37–C60, C51–C57, C56–C82, and C69–C89. Residues 75-77 (ECD) carry the D/ECD-tripeptide motif. Positions 99 to 105 (PCQNNNG) are excised as a propeptide.

The protein belongs to the venom metalloproteinase (M12B) family. P-III subfamily. As to quaternary structure, monomer. Zn(2+) serves as cofactor. In terms of tissue distribution, expressed by the venom gland.

The protein resides in the secreted. Impairs hemostasis in the envenomed animal. Its function is as follows. Inhibits platelet aggregation induced by ADP, thrombin, platelet-activating factor and collagen. Acts by inhibiting fibrinogen interaction with platelet receptors GPIIb/GPIIIa (ITGA2B/ITGB3). The protein is Zinc metalloproteinase/disintegrin of Gloydius brevicauda (Korean slamosa snake).